The chain runs to 933 residues: Anoctamin-7 (933 aa).

The Cytoplasmic segment spans residues Met-1–Gly-355. The interval Glu-43–Ala-101 is disordered. The helical transmembrane segment at Trp-356–Phe-376 threads the bilayer. Residues Ser-377–His-420 are Extracellular-facing. A helical transmembrane segment spans residues Gly-421–Trp-441. Topologically, residues Lys-442 to Ala-499 are cytoplasmic. A helical membrane pass occupies residues Gly-500 to Leu-520. Over Tyr-521 to Ser-550 the chain is Extracellular. Residues Val-551–Leu-571 traverse the membrane as a helical segment. At Thr-572–Thr-588 the chain is on the cytoplasmic side. Residues Leu-589–Phe-609 traverse the membrane as a helical segment. Residues Lys-610–Gln-714 are Extracellular-facing. Residues Phe-715–Asn-735 traverse the membrane as a helical segment. Residues Asn-736–Gly-763 lie on the Cytoplasmic side of the membrane. Residues Ile-764–Leu-784 traverse the membrane as a helical segment. The Extracellular segment spans residues Ala-785–Tyr-843. Asn-809 and Asn-824 each carry an N-linked (GlcNAc...) asparagine glycan. A helical membrane pass occupies residues Trp-844–Val-864. Residues Gly-865–Gln-933 lie on the Cytoplasmic side of the membrane. Positions Gly-902–Gln-933 are disordered. The span at Glu-915 to Gln-933 shows a compositional bias: polar residues.

It belongs to the anoctamin family. As to expression, specifically expressed in epithelial cells of the prostate (at protein level).

The protein resides in the cell membrane. Its subcellular location is the cell junction. It localises to the endoplasmic reticulum. The protein localises to the cytoplasm. It is found in the cytosol. It carries out the reaction a 1,2-diacyl-sn-glycero-3-phospho-L-serine(in) = a 1,2-diacyl-sn-glycero-3-phospho-L-serine(out). The catalysed reaction is a beta-D-galactosyl-(1&lt;-&gt;1')-N-acylsphing-4-enine(out) = a beta-D-galactosyl-(1&lt;-&gt;1')-N-acylsphing-4-enine(in). The enzyme catalyses a 1,2-diacyl-sn-glycero-3-phosphocholine(in) = a 1,2-diacyl-sn-glycero-3-phosphocholine(out). In terms of biological role, has calcium-dependent phospholipid scramblase activity; scrambles phosphatidylserine, phosphatidylcholine and galactosylceramide. Does not exhibit calcium-activated chloride channel (CaCC) activity. May play a role in cell-cell interactions. This Homo sapiens (Human) protein is Anoctamin-7 (ANO7).